Here is a 754-residue protein sequence, read N- to C-terminus: Probable TonB-dependent siderophore receptor PirA (754 aa).

The first 24 residues, 1–24 (MSKRIIQSVLSVSVLASMMSMAFA), serve as a signal peptide directing secretion. Residues 54 to 181 (EQVKQSLGVS…AGGVVNIITK (128 aa)) form the TBDR plug domain. In terms of domain architecture, TBDR beta-barrel spans 186–754 (ETHGSVEFYT…AYYASLKYSF (569 aa)). The span at 404-414 (VSTTQGKDSSG) shows a compositional bias: polar residues. Positions 404 to 424 (VSTTQGKDSSGSGYGDQLAKG) are disordered. Cys511 and Cys519 form a disulfide bridge. A TonB C-terminal box motif is present at residues 737-754 (QTYNEPGRAYYASLKYSF).

It belongs to the TonB-dependent receptor family.

The protein localises to the cell outer membrane. Probably involved in the initial step of iron uptake by binding iron chelating siderophores, thereby allowing extraction of iron from the environment. May bind the siderophore, ferric enterobactin, with micromolar affinity. The sequence is that of Probable TonB-dependent siderophore receptor PirA from Acinetobacter baumannii (strain ATCC 19606 / DSM 30007 / JCM 6841 / CCUG 19606 / CIP 70.34 / NBRC 109757 / NCIMB 12457 / NCTC 12156 / 81).